A 778-amino-acid chain; its full sequence is Dolichyl-phosphate-mannose--protein mannosyltransferase 4 (778 aa).

The segment covering methionine 1–serine 28 has biased composition (basic and acidic residues). The interval methionine 1–glutamate 44 is disordered. The span at serine 29–serine 41 shows a compositional bias: polar residues. The N-linked (GlcNAc...) asparagine glycan is linked to asparagine 40. The next 7 helical transmembrane spans lie at leucine 60–proline 80, phenylalanine 103–glycine 123, valine 145–isoleucine 165, isoleucine 196–phenylalanine 216, proline 223–isoleucine 243, valine 248–tryptophan 268, and phenylalanine 288–isoleucine 308. An N-linked (GlcNAc...) asparagine glycan is attached at asparagine 335. MIR domains are found at residues serine 336–alanine 396, asparagine 408–serine 467, and arginine 474–isoleucine 529. Helical transmembrane passes span tryptophan 608–leucine 628, phenylalanine 644–isoleucine 664, leucine 669–isoleucine 689, and valine 726–phenylalanine 746.

This sequence belongs to the glycosyltransferase 39 family.

Its subcellular location is the endoplasmic reticulum membrane. It carries out the reaction a di-trans,poly-cis-dolichyl beta-D-mannosyl phosphate + L-seryl-[protein] = 3-O-(alpha-D-mannosyl)-L-seryl-[protein] + a di-trans,poly-cis-dolichyl phosphate + H(+). It catalyses the reaction a di-trans,poly-cis-dolichyl beta-D-mannosyl phosphate + L-threonyl-[protein] = 3-O-(alpha-D-mannosyl)-L-threonyl-[protein] + a di-trans,poly-cis-dolichyl phosphate + H(+). Its pathway is protein modification; protein glycosylation. Its function is as follows. Transfers mannose from Dol-P-mannose to Ser or Thr residues on proteins. Required for normal cell wall and septum formation. In Schizosaccharomyces pombe (strain 972 / ATCC 24843) (Fission yeast), this protein is Dolichyl-phosphate-mannose--protein mannosyltransferase 4 (ogm4).